Consider the following 426-residue polypeptide: Colanic acid biosynthesis protein WcaK (426 aa).

This sequence belongs to the polysaccharide pyruvyl transferase family.

The protein operates within slime biogenesis; slime polysaccharide biosynthesis. This is Colanic acid biosynthesis protein WcaK (wcaK) from Escherichia coli (strain K12).